A 226-amino-acid chain; its full sequence is Glutathione peroxidase 3 (226 aa).

The N-terminal stretch at 1–24 (MARLLQASCLLSLLLAGFVPQSRG) is a signal peptide. U73 is a catalytic residue. Residue U73 is a non-standard amino acid, selenocysteine.

It belongs to the glutathione peroxidase family. As to quaternary structure, homotetramer. Secreted in plasma.

It localises to the secreted. The catalysed reaction is 2 glutathione + H2O2 = glutathione disulfide + 2 H2O. It carries out the reaction tert-butyl hydroperoxide + 2 glutathione = tert-butanol + glutathione disulfide + H2O. In terms of biological role, protects cells and enzymes from oxidative damage, by catalyzing the reduction of hydrogen peroxide, lipid peroxides and organic hydroperoxide, by glutathione. This Hylobates lar (Lar gibbon) protein is Glutathione peroxidase 3.